The chain runs to 213 residues: 3-isopropylmalate dehydratase small subunit (213 aa).

The protein belongs to the LeuD family. LeuD type 1 subfamily. As to quaternary structure, heterodimer of LeuC and LeuD.

The enzyme catalyses (2R,3S)-3-isopropylmalate = (2S)-2-isopropylmalate. It participates in amino-acid biosynthesis; L-leucine biosynthesis; L-leucine from 3-methyl-2-oxobutanoate: step 2/4. Catalyzes the isomerization between 2-isopropylmalate and 3-isopropylmalate, via the formation of 2-isopropylmaleate. This chain is 3-isopropylmalate dehydratase small subunit, found in Magnetococcus marinus (strain ATCC BAA-1437 / JCM 17883 / MC-1).